The primary structure comprises 662 residues: DNA ligase (662 aa).

Residues 31 to 35 (DSEYD), 79 to 80 (SL), and Glu-119 contribute to the NAD(+) site. Catalysis depends on Lys-121, which acts as the N6-AMP-lysine intermediate. Positions 142, 176, 288, and 312 each coordinate NAD(+). Cys-405, Cys-408, Cys-421, and Cys-427 together coordinate Zn(2+). The 80-residue stretch at 583–662 (NIEKKLDNLT…DELNSFLDNL (80 aa)) folds into the BRCT domain.

This sequence belongs to the NAD-dependent DNA ligase family. LigA subfamily. Requires Mg(2+) as cofactor. Mn(2+) serves as cofactor.

It catalyses the reaction NAD(+) + (deoxyribonucleotide)n-3'-hydroxyl + 5'-phospho-(deoxyribonucleotide)m = (deoxyribonucleotide)n+m + AMP + beta-nicotinamide D-nucleotide.. DNA ligase that catalyzes the formation of phosphodiester linkages between 5'-phosphoryl and 3'-hydroxyl groups in double-stranded DNA using NAD as a coenzyme and as the energy source for the reaction. It is essential for DNA replication and repair of damaged DNA. The protein is DNA ligase of Finegoldia magna (strain ATCC 29328 / DSM 20472 / WAL 2508) (Peptostreptococcus magnus).